Here is a 371-residue protein sequence, read N- to C-terminus: Histidinol-phosphate aminotransferase (371 aa).

Lys232 is modified (N6-(pyridoxal phosphate)lysine).

Belongs to the class-II pyridoxal-phosphate-dependent aminotransferase family. Histidinol-phosphate aminotransferase subfamily. In terms of assembly, homodimer. Pyridoxal 5'-phosphate is required as a cofactor.

It carries out the reaction L-histidinol phosphate + 2-oxoglutarate = 3-(imidazol-4-yl)-2-oxopropyl phosphate + L-glutamate. The protein operates within amino-acid biosynthesis; L-histidine biosynthesis; L-histidine from 5-phospho-alpha-D-ribose 1-diphosphate: step 7/9. This is Histidinol-phosphate aminotransferase from Methylibium petroleiphilum (strain ATCC BAA-1232 / LMG 22953 / PM1).